Consider the following 102-residue polypeptide: Small ribosomal subunit protein bS18c (102 aa).

The segment covering 1–19 (MDKTKRPLRKSKRSFRRRL) has biased composition (basic residues). A disordered region spans residues 1–26 (MDKTKRPLRKSKRSFRRRLPPPIGSG).

Belongs to the bacterial ribosomal protein bS18 family. Part of the 30S ribosomal subunit.

Its subcellular location is the plastid. It is found in the chloroplast. The chain is Small ribosomal subunit protein bS18c from Piper cenocladum (Ant piper).